The sequence spans 317 residues: MAPSSSSGLTFKLHPLVMLNISDHFTRVKTQLNPPAASCATGNGSNNADAMLLQNPRVYGCVIGLQRGRTVEIFNSFELIFDPALDTLDRSFLEKKQELYKKVFPDFYVLGWYSTGSDATESDMHIHKALMDINESPVYVLLNPAINHAQKDLPVTIYESEFHVIDGIPQSIFVHTSYTIETVEAERISVDHVAHLKPSDGGSAATQLAAHLTGIHSAIKMLNSRIRVLYQHIVAMQKGDKPCENSVLRQVSSLLRSLPAAESEKFNENFLMEYNDKLLMSYLAMITNCTSNMNEVVDKFNTAYDKHSRRGGRTAFM.

One can recognise an MPN domain in the interval 11 to 164 (FKLHPLVMLN…VTIYESEFHV (154 aa)).

It belongs to the peptidase M67A family. CSN6 subfamily. As to quaternary structure, component of the CSN complex, probably composed of CSN1, CSN2, CSN3, CSN4, CSN5 (CSN5A or CSN5B), CSN6 (CSN6A or CSN6B), CSN7 and CSN8. Interacts with itself. In the complex, it probably interacts directly with CSN4, CSN5A or CSN5B, and CSN7. Binds to the translation initiation factors TIF3E1.

It localises to the cytoplasm. The protein resides in the nucleus. In terms of biological role, component of the COP9 signalosome complex (CSN), a complex involved in various cellular and developmental processes such as photomorphogenesis and auxin and jasmonate responses. The CSN complex is an essential regulator of the ubiquitin (Ubl) conjugation pathway by mediating the deneddylation of the cullin subunits of SCF-type E3 ligase complexes, leading to decrease the Ubl ligase activity of SCF. It is involved in repression of photomorphogenesis in darkness by regulating the activity of COP1-containing Ubl ligase complexes. The complex is also required for degradation of PSIAA6 by regulating the activity of the Ubl ligase SCF-TIR complex. Essential for the structural integrity of the CSN holocomplex. This Arabidopsis thaliana (Mouse-ear cress) protein is COP9 signalosome complex subunit 6b.